The sequence spans 347 residues: Phosphoribosylformylglycinamidine cyclo-ligase (347 aa).

This sequence belongs to the AIR synthase family.

The protein localises to the cytoplasm. It catalyses the reaction 2-formamido-N(1)-(5-O-phospho-beta-D-ribosyl)acetamidine + ATP = 5-amino-1-(5-phospho-beta-D-ribosyl)imidazole + ADP + phosphate + H(+). It functions in the pathway purine metabolism; IMP biosynthesis via de novo pathway; 5-amino-1-(5-phospho-D-ribosyl)imidazole from N(2)-formyl-N(1)-(5-phospho-D-ribosyl)glycinamide: step 2/2. In Prochlorococcus marinus (strain MIT 9301), this protein is Phosphoribosylformylglycinamidine cyclo-ligase.